Here is a 303-residue protein sequence, read N- to C-terminus: Probable cell division protein WhiA (303 aa).

The segment at residues 272–303 (SIQQIADSLAVPLTKSGVNHRLRKINKIAEDL) is a DNA-binding region (H-T-H motif).

Belongs to the WhiA family.

Involved in cell division and chromosome segregation. The protein is Probable cell division protein WhiA of Streptococcus mutans serotype c (strain ATCC 700610 / UA159).